A 307-amino-acid polypeptide reads, in one-letter code: 2-dehydropantoate 2-reductase (307 aa).

NADP(+) is bound by residues 7 to 12 (GSGAMG), Asn102, and Ala128. Residue Asn102 coordinates substrate. Lys184 functions as the Proton donor in the catalytic mechanism. Substrate is bound by residues Asn188, Asn192, and Ser255. Glu268 is a binding site for NADP(+).

It belongs to the ketopantoate reductase family.

It localises to the cytoplasm. It catalyses the reaction (R)-pantoate + NADP(+) = 2-dehydropantoate + NADPH + H(+). The protein operates within cofactor biosynthesis; (R)-pantothenate biosynthesis; (R)-pantoate from 3-methyl-2-oxobutanoate: step 2/2. In terms of biological role, catalyzes the NADPH-dependent reduction of ketopantoate into pantoic acid. This chain is 2-dehydropantoate 2-reductase (apbA), found in Streptococcus pyogenes serotype M1.